Here is a 245-residue protein sequence, read N- to C-terminus: Carboxy-S-adenosyl-L-methionine synthase (245 aa).

S-adenosyl-L-methionine contacts are provided by residues Tyr-39, 64 to 66 (GSS), 117 to 118 (DI), and Arg-199.

Belongs to the class I-like SAM-binding methyltransferase superfamily. Cx-SAM synthase family. In terms of assembly, homodimer.

It catalyses the reaction prephenate + S-adenosyl-L-methionine = carboxy-S-adenosyl-L-methionine + 3-phenylpyruvate + H2O. Catalyzes the conversion of S-adenosyl-L-methionine (SAM) to carboxy-S-adenosyl-L-methionine (Cx-SAM). The sequence is that of Carboxy-S-adenosyl-L-methionine synthase from Desulfotalea psychrophila (strain LSv54 / DSM 12343).